Consider the following 788-residue polypeptide: Structure-specific endonuclease subunit SLX4 (788 aa).

Disordered regions lie at residues 59–86 (LQNENLENKNKDTSITKPKRRSKRDNNR), 562–584 (KRQPVDSENEIRDSEDEGEHDNS), and 599–622 (DLVNLGRNPRNENDTSVLQVPSSP). Residues 562–573 (KRQPVDSENEIR) are compositionally biased toward basic and acidic residues. A compositionally biased stretch (polar residues) spans 612-622 (DTSVLQVPSSP).

Belongs to the SLX4 family. In terms of assembly, forms a heterodimer with SLX1. In terms of processing, phosphorylated in response to DNA damage.

The protein localises to the nucleus. In terms of biological role, regulatory subunit of the SLX1-SLX4 structure-specific endonuclease that resolves DNA secondary structures generated during DNA repair and recombination. Has endonuclease activity towards branched DNA substrates, introducing single-strand cuts in duplex DNA close to junctions with ss-DNA. The sequence is that of Structure-specific endonuclease subunit SLX4 from Debaryomyces hansenii (strain ATCC 36239 / CBS 767 / BCRC 21394 / JCM 1990 / NBRC 0083 / IGC 2968) (Yeast).